A 433-amino-acid chain; its full sequence is Probable beta-1,3-galactosyl-O-glycosyl-glycoprotein beta-1,6-N-acetylglucosaminyltransferase 7 (433 aa).

Residues 1–8 (MSQLRTTK) are Cytoplasmic-facing. The chain crosses the membrane as a helical; Signal-anchor for type II membrane protein span at residues 9 to 25 (AGLVACGMICAFIFLYL). Topologically, residues 26–433 (RNPGPEEAEA…QSHFNSQPHH (408 aa)) are extracellular. Cystine bridges form between Cys57–Cys209, Cys143–Cys358, Cys164–Cys191, and Cys367–Cys398. The N-linked (GlcNAc...) asparagine glycan is linked to Asn112. Residues 233–275 (NITPGVTPPANSKPKTGQGPPKPSPDENSYTAPNTIFKQSPPH) form a disordered region. The span at 258–275 (DENSYTAPNTIFKQSPPH) shows a compositional bias: polar residues. Residues 413–433 (VPPEPHWQFPQQSHFNSQPHH) are disordered. The span at 421-433 (FPQQSHFNSQPHH) shows a compositional bias: polar residues.

The protein belongs to the glycosyltransferase 14 family.

Its subcellular location is the golgi apparatus membrane. The protein operates within protein modification; protein glycosylation. Probable glycosyltransferase. This Mus musculus (Mouse) protein is Probable beta-1,3-galactosyl-O-glycosyl-glycoprotein beta-1,6-N-acetylglucosaminyltransferase 7.